Reading from the N-terminus, the 169-residue chain is Prolyl-tRNA synthetase associated domain-containing protein 1 (169 aa).

Belongs to the PRORSD1 family.

This chain is Prolyl-tRNA synthetase associated domain-containing protein 1 (Prorsd1), found in Mus musculus (Mouse).